The chain runs to 315 residues: Olfactory receptor 2V1 (315 aa).

Residues 1 to 31 (MGRWVNQSYTDGFFLLGIFSHSQTDLVLFSA) lie on the Extracellular side of the membrane. N-linked (GlcNAc...) asparagine glycosylation is present at Asn-6. The chain crosses the membrane as a helical span at residues 32–52 (VMVVFTVALCGNVLLIFLIYL). Topologically, residues 53-58 (DAGLHT) are cytoplasmic. A helical transmembrane segment spans residues 59 to 79 (PMYFFLSQLSLMDLMLVCNIV). The Extracellular segment spans residues 80–99 (PKMAANFLSGRKSISFVGCG). A disulfide bridge links Cys-98 with Cys-180. A helical transmembrane segment spans residues 100-120 (IQIGFFVSLVGSEGLLLGLMA). Topologically, residues 121-149 (YDRYVAVSHPLHYPILMNQRVCLQITGSS) are cytoplasmic. The helical transmembrane segment at 150 to 170 (WAFGIIDGVIQMVAAMGLPYC) threads the bilayer. Residues 171 to 198 (GSRSVDHFFCEVQALLKLACADTSLFDT) are Extracellular-facing. The helical transmembrane segment at 199–219 (LLFACCVFMLLLPFSIIMASY) threads the bilayer. The Cytoplasmic segment spans residues 220 to 238 (ACILGAVLRIRSAQAWKKA). Residues 239–259 (LATCSSHLTAVTLFYGAAMFM) form a helical membrane-spanning segment. Over 260 to 272 (YLRPRRYRAPSHD) the chain is Extracellular. Residues 273–293 (KVASIFYTVLTPMLNPLIYSL) form a helical membrane-spanning segment. The Cytoplasmic segment spans residues 294–315 (RNGEVMGALRKGLDRCRIGSQH).

The protein belongs to the G-protein coupled receptor 1 family.

It is found in the cell membrane. Functionally, odorant receptor. This is Olfactory receptor 2V1 (OR2V1) from Homo sapiens (Human).